A 2126-amino-acid polypeptide reads, in one-letter code: Phthioceranic/hydroxyphthioceranic acid synthase (2126 aa).

In terms of domain architecture, Ketosynthase family 3 (KS3) spans 24-447 (VTPVAVIGMA…GTNVHAVVEQ (424 aa)). Cysteine 196 functions as the Acyl-thioester intermediate; for beta-ketoacyl synthase activity in the catalytic mechanism. Active-site for beta-ketoacyl synthase activity residues include histidine 331 and histidine 367. The interval 449 to 549 (PQTEAQPHAA…VYQPAVGQDD (101 aa)) is linker domain (LD). The tract at residues 550 to 849 (RGPVWLFSGQ…VAALAGMRRE (300 aa)) is acyltransferase (AT). Serine 641 (acyl-ester intermediate; for acyltransferase activity) is an active-site residue. The segment at 909–1191 (STVAVHPLLG…LAVCGLRIGT (283 aa)) is dehydratase (DH). The tract at residues 914 to 1032 (HPLLGAHVRL…RRASAVLQQV (119 aa)) is N-terminal hotdog fold. Residues 914 to 1198 (HPLLGAHVRL…IGTGVSERDK (285 aa)) enclose the PKS/mFAS DH domain. Histidine 947 acts as the Proton acceptor; for dehydratase activity in catalysis. The tract at residues 1051–1198 (PCRVDGEDLR…IGTGVSERDK (148 aa)) is C-terminal hotdog fold. Aspartate 1115 (proton donor; for dehydratase activity) is an active-site residue. The segment at 1227 to 1398 (KWLLISDCAA…SEEDETAWRD (172 aa)) is pseudo beta-ketoacyl reductase (PsiKR). The tract at residues 1426 to 1750 (SGMRLQIRTP…EHTGKLVLHI (325 aa)) is enoylreductase (ER). The interval 1772-2019 (GSYIITGGLG…AERSRFFEVF (248 aa)) is beta-ketoacyl reductase (KR). Residues 1780 to 1783 (LGGL), 1803 to 1806 (SRTQ), 1831 to 1832 (DI), and 1904 to 1905 (FS) each bind NADP(+). Positions 2040–2126 (DEWPARLRQL…DAPAAALSSQ (87 aa)) constitute a Carrier domain. Residue serine 2075 is modified to O-(pantetheine 4'-phosphoryl)serine.

It depends on pantetheine 4'-phosphate as a cofactor.

It catalyses the reaction hexadecanoyl-[(hydroxy)phthioceranic acid synthase] + 7 (S)-methylmalonyl-CoA + 14 NADPH + 21 H(+) = C37-phthioceranyl-[(hydroxy)phthioceranic acid synthase] + 7 CO2 + 14 NADP(+) + 7 CoA + 7 H2O. The enzyme catalyses hexadecanoyl-[(hydroxy)phthioceranic acid synthase] + 8 (S)-methylmalonyl-CoA + 16 NADPH + 24 H(+) = C40-phthioceranyl-[(hydroxy)phthioceranic acid synthase] + 8 CO2 + 16 NADP(+) + 8 CoA + 8 H2O. In Mycobacterium bovis (strain BCG / Pasteur 1173P2), this protein is Phthioceranic/hydroxyphthioceranic acid synthase (pks2).